The primary structure comprises 168 residues: ATP synthase subunit b, sodium ion specific (168 aa).

The chain crosses the membrane as a helical span at residues 9–29; sequence VSIDINMFWQIINFLILMFFF.

The protein belongs to the ATPase B chain family. As to quaternary structure, F-type ATPases have 2 components, F(1) - the catalytic core - and F(0) - the membrane proton channel. F(1) has five subunits: alpha(3), beta(3), gamma(1), delta(1), epsilon(1). F(0) has three main subunits: a(1), b(2) and c(10-14). The alpha and beta chains form an alternating ring which encloses part of the gamma chain. F(1) is attached to F(0) by a central stalk formed by the gamma and epsilon chains, while a peripheral stalk is formed by the delta and b chains.

The protein resides in the cell inner membrane. Functionally, f(1)F(0) ATP synthase produces ATP from ADP in the presence of a proton or sodium gradient. F-type ATPases consist of two structural domains, F(1) containing the extramembraneous catalytic core and F(0) containing the membrane proton channel, linked together by a central stalk and a peripheral stalk. During catalysis, ATP synthesis in the catalytic domain of F(1) is coupled via a rotary mechanism of the central stalk subunits to proton translocation. In terms of biological role, component of the F(0) channel, it forms part of the peripheral stalk, linking F(1) to F(0). The protein is ATP synthase subunit b, sodium ion specific (atpF) of Propionigenium modestum.